The chain runs to 85 residues: Small ribosomal subunit protein bS18A (85 aa).

This sequence belongs to the bacterial ribosomal protein bS18 family. Part of the 30S ribosomal subunit. Forms a tight heterodimer with protein bS6.

Binds as a heterodimer with protein bS6 to the central domain of the 16S rRNA, where it helps stabilize the platform of the 30S subunit. The sequence is that of Small ribosomal subunit protein bS18A from Mycolicibacterium smegmatis (strain ATCC 700084 / mc(2)155) (Mycobacterium smegmatis).